An 89-amino-acid polypeptide reads, in one-letter code: Antimicrobial peptide Ar-AMP (89 aa).

The signal sequence occupies residues 1–25 (MVNMKSVALIVIVMMAFMMVDPSMG). Residues 26–68 (AGECVQGRCPSGMCCSQFGYCGRGPKYCGRASTTVDHQADAAA) enclose the Chitin-binding type-1 domain. 3 disulfides stabilise this stretch: Cys-29–Cys-40, Cys-34–Cys-46, and Cys-39–Cys-53. A propeptide spans 56 to 89 (ASTTVDHQADAAAAAATKTANNPTDAKLAGAGSP) (removed in mature form).

Chitin-binding protein that inhibits the growth of the fungal pathogens B.cinerea, F.culmorum, H.sativum and A.consortiale, but not that of R.solani. Induces morphological changes in the fungal pathogens F.culmorum, H.sativum and R.solani, but not in A.consortiale and B.cinerea. Has antibacterial activity against the Gram-positive bacterium B.subtilis, but lacks antibacterial activity against the Gram-negative bacterium E.coli. This Amaranthus retroflexus (Redroot amaranth) protein is Antimicrobial peptide Ar-AMP.